A 433-amino-acid polypeptide reads, in one-letter code: Divalent metal cation transporter MntH (433 aa).

The next 11 membrane-spanning stretches (helical) occupy residues 32-52 (LIFA…GNFA), 62-82 (GYDL…FQGL), 101-121 (TLPP…AMAT), 131-151 (IGIA…TGIV), 168-188 (LVIG…LLIV), 209-229 (ALTI…LFLH), 256-276 (VLAA…MAAG), 296-316 (SPLL…ASGV), 345-365 (ALTM…TRAL), 366-386 (VLSQ…LLWF), and 401-421 (ITAI…VILL).

This sequence belongs to the NRAMP family.

It localises to the cell inner membrane. In terms of biological role, h(+)-stimulated, divalent metal cation uptake system. The protein is Divalent metal cation transporter MntH of Acidiphilium cryptum (strain JF-5).